A 545-amino-acid polypeptide reads, in one-letter code: Protein disulfide isomerase-like 1-3 (545 aa).

The segment covering 1–16 has biased composition (pro residues); it reads MWPRAPATPPPPPWPS. A disordered region spans residues 1 to 24; the sequence is MWPRAPATPPPPPWPSKPSAASRS. The region spanning 55–189 is the Thioredoxin 1 domain; sequence ASSTAFAAAF…IVAYLKRQAG (135 aa). N87 carries N-linked (GlcNAc...) asparagine glycosylation. Residues C107 and C110 each act as nucleophile in the active site. A disulfide bond links C107 and C110. N349 carries an N-linked (GlcNAc...) asparagine glycan. Residues 403–545 form the Thioredoxin 2 domain; the sequence is FTEGTLAPHV…TTTESVKDEL (143 aa). Catalysis depends on nucleophile residues C453 and C456. The cysteines at positions 453 and 456 are disulfide-linked. The Prevents secretion from ER motif lies at 542–545; that stretch reads KDEL.

The protein belongs to the protein disulfide isomerase family.

It localises to the endoplasmic reticulum lumen. It carries out the reaction Catalyzes the rearrangement of -S-S- bonds in proteins.. Functionally, acts as a protein-folding catalyst that interacts with nascent polypeptides to catalyze the formation, isomerization, and reduction or oxidation of disulfide bonds. May play a role in storage protein biogenesis. This chain is Protein disulfide isomerase-like 1-3 (PDIL1-3), found in Oryza sativa subsp. japonica (Rice).